We begin with the raw amino-acid sequence, 500 residues long: Aspartyl/glutamyl-tRNA(Asn/Gln) amidotransferase subunit B (500 aa).

It belongs to the GatB/GatE family. GatB subfamily. In terms of assembly, heterotrimer of A, B and C subunits.

The catalysed reaction is L-glutamyl-tRNA(Gln) + L-glutamine + ATP + H2O = L-glutaminyl-tRNA(Gln) + L-glutamate + ADP + phosphate + H(+). The enzyme catalyses L-aspartyl-tRNA(Asn) + L-glutamine + ATP + H2O = L-asparaginyl-tRNA(Asn) + L-glutamate + ADP + phosphate + 2 H(+). In terms of biological role, allows the formation of correctly charged Asn-tRNA(Asn) or Gln-tRNA(Gln) through the transamidation of misacylated Asp-tRNA(Asn) or Glu-tRNA(Gln) in organisms which lack either or both of asparaginyl-tRNA or glutaminyl-tRNA synthetases. The reaction takes place in the presence of glutamine and ATP through an activated phospho-Asp-tRNA(Asn) or phospho-Glu-tRNA(Gln). This Brucella anthropi (strain ATCC 49188 / DSM 6882 / CCUG 24695 / JCM 21032 / LMG 3331 / NBRC 15819 / NCTC 12168 / Alc 37) (Ochrobactrum anthropi) protein is Aspartyl/glutamyl-tRNA(Asn/Gln) amidotransferase subunit B.